The chain runs to 467 residues: Cobyrinate a,c-diamide synthase (467 aa).

The 194-residue stretch at 256 to 449 folds into the GATase cobBQ-type domain; sequence RVGYAADQAF…AHIHVEGAPE (194 aa). The active-site Nucleophile is the cysteine 338.

It belongs to the CobB/CbiA family. Requires Mg(2+) as cofactor.

It carries out the reaction cob(II)yrinate + 2 L-glutamine + 2 ATP + 2 H2O = cob(II)yrinate a,c diamide + 2 L-glutamate + 2 ADP + 2 phosphate + 2 H(+). It participates in cofactor biosynthesis; adenosylcobalamin biosynthesis; cob(II)yrinate a,c-diamide from sirohydrochlorin (anaerobic route): step 10/10. In terms of biological role, catalyzes the ATP-dependent amidation of the two carboxylate groups at positions a and c of cobyrinate, using either L-glutamine or ammonia as the nitrogen source. This chain is Cobyrinate a,c-diamide synthase, found in Magnetococcus marinus (strain ATCC BAA-1437 / JCM 17883 / MC-1).